The following is a 261-amino-acid chain: Prostatic glandular kallikrein-6 (261 aa).

The first 18 residues, 1–18 (MWLLILFLILSLGWNDAA), serve as a signal peptide directing secretion. Residues 19–24 (PPGQSR) constitute a propeptide, activation peptide. Residues 25-258 (IIGGFNCEKN…FTSWMKKVMK (234 aa)) form the Peptidase S1 domain. 5 cysteine pairs are disulfide-bonded: C31–C173, C50–C66, C152–C219, C184–C198, and C209–C234. The active-site Charge relay system is the H65. N-linked (GlcNAc...) asparagine glycosylation occurs at N108. The active-site Charge relay system is D120. S213 acts as the Charge relay system in catalysis.

Belongs to the peptidase S1 family. Kallikrein subfamily.

The catalysed reaction is Preferential cleavage of Arg-|-Xaa bonds in small molecule substrates. Highly selective action to release kallidin (lysyl-bradykinin) from kininogen involves hydrolysis of Met-|-Xaa or Leu-|-Xaa.. In terms of biological role, glandular kallikreins cleave Met-Lys and Arg-Ser bonds in kininogen to release Lys-bradykinin. The protein is Prostatic glandular kallikrein-6 (Klk6) of Rattus norvegicus (Rat).